Consider the following 439-residue polypeptide: Signal recognition particle 54 kDa protein (439 aa).

GTP-binding positions include 104-111, 184-188, and 242-245; these read GLQGSGKT, DTAGR, and SKLD.

Belongs to the GTP-binding SRP family. SRP54 subfamily. In terms of assembly, part of the signal recognition particle protein translocation system, which is composed of SRP and FtsY. Archaeal SRP consists of a 7S RNA molecule of 300 nucleotides and two protein subunits: SRP54 and SRP19.

Its subcellular location is the cytoplasm. The enzyme catalyses GTP + H2O = GDP + phosphate + H(+). Involved in targeting and insertion of nascent membrane proteins into the cytoplasmic membrane. Binds to the hydrophobic signal sequence of the ribosome-nascent chain (RNC) as it emerges from the ribosomes. The SRP-RNC complex is then targeted to the cytoplasmic membrane where it interacts with the SRP receptor FtsY. This Methanococcoides burtonii (strain DSM 6242 / NBRC 107633 / OCM 468 / ACE-M) protein is Signal recognition particle 54 kDa protein.